A 253-amino-acid chain; its full sequence is REF/SRPP-like protein OsI_017815 (253 aa).

The interval 1-26 (MADSGSDAPISNRPEEEVTVEKTPEM) is disordered. Basic and acidic residues predominate over residues 13 to 26 (RPEEEVTVEKTPEM).

It belongs to the REF/SRPP family.

The protein is REF/SRPP-like protein OsI_017815 of Oryza sativa subsp. indica (Rice).